The chain runs to 420 residues: Serine--tRNA ligase (420 aa).

Residue Thr228 to Glu230 participates in L-serine binding. Residue Arg259–Glu261 participates in ATP binding. Glu282 lines the L-serine pocket. Position 346 to 349 (Glu346 to Ser349) interacts with ATP. Ser382 provides a ligand contact to L-serine.

The protein belongs to the class-II aminoacyl-tRNA synthetase family. Type-1 seryl-tRNA synthetase subfamily. Homodimer. The tRNA molecule binds across the dimer.

The protein resides in the cytoplasm. The catalysed reaction is tRNA(Ser) + L-serine + ATP = L-seryl-tRNA(Ser) + AMP + diphosphate + H(+). It catalyses the reaction tRNA(Sec) + L-serine + ATP = L-seryl-tRNA(Sec) + AMP + diphosphate + H(+). The protein operates within aminoacyl-tRNA biosynthesis; selenocysteinyl-tRNA(Sec) biosynthesis; L-seryl-tRNA(Sec) from L-serine and tRNA(Sec): step 1/1. Its function is as follows. Catalyzes the attachment of serine to tRNA(Ser). Is also able to aminoacylate tRNA(Sec) with serine, to form the misacylated tRNA L-seryl-tRNA(Sec), which will be further converted into selenocysteinyl-tRNA(Sec). The chain is Serine--tRNA ligase from Mycoplasmoides gallisepticum (strain R(low / passage 15 / clone 2)) (Mycoplasma gallisepticum).